The primary structure comprises 107 residues: L-rhamnose mutarotase (107 aa).

Tyr-18 contacts substrate. His-22 (proton donor) is an active-site residue. Residues Tyr-41 and 76–77 (WW) contribute to the substrate site.

The protein belongs to the rhamnose mutarotase family. As to quaternary structure, homodimer.

The protein resides in the cytoplasm. It catalyses the reaction alpha-L-rhamnose = beta-L-rhamnose. The protein operates within carbohydrate metabolism; L-rhamnose metabolism. In terms of biological role, involved in the anomeric conversion of L-rhamnose. The protein is L-rhamnose mutarotase of Paraburkholderia xenovorans (strain LB400).